The following is a 152-amino-acid chain: UPF0225 protein YchJ (152 aa).

This sequence belongs to the UPF0225 family.

In Salmonella gallinarum (strain 287/91 / NCTC 13346), this protein is UPF0225 protein YchJ.